We begin with the raw amino-acid sequence, 275 residues long: Phosphatidylglycerol--prolipoprotein diacylglyceryl transferase (275 aa).

Transmembrane regions (helical) follow at residues 22–42, 61–81, 96–116, 125–145, 177–197, 204–224, and 238–258; these read LSVR…MWLA, LLFY…VLFY, IWTG…AMIW, FFTV…VGRI, SQLY…NLFW, GAIS…VEFV, and ISMG…MVWA. R144 is an a 1,2-diacyl-sn-glycero-3-phospho-(1'-sn-glycerol) binding site.

This sequence belongs to the Lgt family.

It localises to the cell inner membrane. It carries out the reaction L-cysteinyl-[prolipoprotein] + a 1,2-diacyl-sn-glycero-3-phospho-(1'-sn-glycerol) = an S-1,2-diacyl-sn-glyceryl-L-cysteinyl-[prolipoprotein] + sn-glycerol 1-phosphate + H(+). It functions in the pathway protein modification; lipoprotein biosynthesis (diacylglyceryl transfer). Functionally, catalyzes the transfer of the diacylglyceryl group from phosphatidylglycerol to the sulfhydryl group of the N-terminal cysteine of a prolipoprotein, the first step in the formation of mature lipoproteins. The sequence is that of Phosphatidylglycerol--prolipoprotein diacylglyceryl transferase from Aeromonas salmonicida (strain A449).